Consider the following 620-residue polypeptide: Proline--tRNA ligase (620 aa).

This sequence belongs to the class-II aminoacyl-tRNA synthetase family. ProS type 1 subfamily. Homodimer.

It localises to the cytoplasm. The catalysed reaction is tRNA(Pro) + L-proline + ATP = L-prolyl-tRNA(Pro) + AMP + diphosphate. In terms of biological role, catalyzes the attachment of proline to tRNA(Pro) in a two-step reaction: proline is first activated by ATP to form Pro-AMP and then transferred to the acceptor end of tRNA(Pro). As ProRS can inadvertently accommodate and process non-cognate amino acids such as alanine and cysteine, to avoid such errors it has two additional distinct editing activities against alanine. One activity is designated as 'pretransfer' editing and involves the tRNA(Pro)-independent hydrolysis of activated Ala-AMP. The other activity is designated 'posttransfer' editing and involves deacylation of mischarged Ala-tRNA(Pro). The misacylated Cys-tRNA(Pro) is not edited by ProRS. This Streptococcus thermophilus (strain ATCC BAA-491 / LMD-9) protein is Proline--tRNA ligase.